The primary structure comprises 419 residues: Tol-Pal system protein TolB (419 aa).

The N-terminal stretch at 1–17 is a signal peptide; that stretch reads MRFIGLVLLLLSVKLFG.

The protein belongs to the TolB family. In terms of assembly, the Tol-Pal system is composed of five core proteins: the inner membrane proteins TolA, TolQ and TolR, the periplasmic protein TolB and the outer membrane protein Pal. They form a network linking the inner and outer membranes and the peptidoglycan layer.

The protein resides in the periplasm. Functionally, part of the Tol-Pal system, which plays a role in outer membrane invagination during cell division and is important for maintaining outer membrane integrity. This chain is Tol-Pal system protein TolB, found in Helicobacter hepaticus (strain ATCC 51449 / 3B1).